Reading from the N-terminus, the 284-residue chain is Bifunctional protein FolD (284 aa).

NADP(+)-binding positions include 166–168 (GAS) and Ile232.

It belongs to the tetrahydrofolate dehydrogenase/cyclohydrolase family. In terms of assembly, homodimer.

The catalysed reaction is (6R)-5,10-methylene-5,6,7,8-tetrahydrofolate + NADP(+) = (6R)-5,10-methenyltetrahydrofolate + NADPH. It carries out the reaction (6R)-5,10-methenyltetrahydrofolate + H2O = (6R)-10-formyltetrahydrofolate + H(+). It participates in one-carbon metabolism; tetrahydrofolate interconversion. In terms of biological role, catalyzes the oxidation of 5,10-methylenetetrahydrofolate to 5,10-methenyltetrahydrofolate and then the hydrolysis of 5,10-methenyltetrahydrofolate to 10-formyltetrahydrofolate. This chain is Bifunctional protein FolD, found in Pseudomonas aeruginosa (strain LESB58).